Reading from the N-terminus, the 118-residue chain is Ribulose bisphosphate carboxylase small subunit (118 aa).

The protein belongs to the RuBisCO small chain family. Heterohexadecamer of 8 large and 8 small subunits.

The protein resides in the carboxysome. Functionally, ruBisCO catalyzes two reactions: the carboxylation of D-ribulose 1,5-bisphosphate, the primary event in carbon dioxide fixation, as well as the oxidative fragmentation of the pentose substrate in the photorespiration process. Both reactions occur simultaneously and in competition at the same active site. Although the small subunit is not catalytic it is essential for maximal activity. This Thermosynechococcus vestitus (strain NIES-2133 / IAM M-273 / BP-1) protein is Ribulose bisphosphate carboxylase small subunit.